We begin with the raw amino-acid sequence, 390 residues long: GPI inositol-deacylase (390 aa).

Residues 21-41 (FIVYFIICLTIIISALGVYLY) form a helical membrane-spanning segment. S202 is a catalytic residue. A helical transmembrane segment spans residues 354 to 374 (VHLLSLTIFALKWTIIVLAII).

Belongs to the GPI inositol-deacylase family.

The protein resides in the endoplasmic reticulum membrane. Involved in inositol deacylation of GPI-anchored proteins which plays important roles in the quality control and ER-associated degradation of GPI-anchored proteins. The protein is GPI inositol-deacylase (BST1) of Candida albicans (strain SC5314 / ATCC MYA-2876) (Yeast).